A 190-amino-acid polypeptide reads, in one-letter code: Adenine phosphoribosyltransferase (190 aa).

The protein belongs to the purine/pyrimidine phosphoribosyltransferase family. In terms of assembly, homodimer.

It localises to the cytoplasm. The catalysed reaction is AMP + diphosphate = 5-phospho-alpha-D-ribose 1-diphosphate + adenine. It participates in purine metabolism; AMP biosynthesis via salvage pathway; AMP from adenine: step 1/1. In terms of biological role, catalyzes a salvage reaction resulting in the formation of AMP, that is energically less costly than de novo synthesis. The protein is Adenine phosphoribosyltransferase of Cupriavidus pinatubonensis (strain JMP 134 / LMG 1197) (Cupriavidus necator (strain JMP 134)).